A 356-amino-acid polypeptide reads, in one-letter code: DNA polymerase IV (356 aa).

Residues 6–187 (IIHIDMDYFF…LDIGDFPGVG (182 aa)) form the UmuC domain. Mg(2+) contacts are provided by Asp-10 and Asp-105. Glu-106 is a catalytic residue.

It belongs to the DNA polymerase type-Y family. In terms of assembly, monomer. Mg(2+) is required as a cofactor.

Its subcellular location is the cytoplasm. It carries out the reaction DNA(n) + a 2'-deoxyribonucleoside 5'-triphosphate = DNA(n+1) + diphosphate. Its function is as follows. Poorly processive, error-prone DNA polymerase involved in untargeted mutagenesis. Copies undamaged DNA at stalled replication forks, which arise in vivo from mismatched or misaligned primer ends. These misaligned primers can be extended by PolIV. Exhibits no 3'-5' exonuclease (proofreading) activity. May be involved in translesional synthesis, in conjunction with the beta clamp from PolIII. The protein is DNA polymerase IV of Staphylococcus aureus (strain COL).